The sequence spans 470 residues: Arginine ADP-riboxanase OspC1 (470 aa).

His138, Gln139, Ser140, Leu144, Ile157, Asn167, Phe183, His201, Phe206, Asp226, and Glu320 together coordinate NAD(+). Glu320 is a catalytic residue. ANK repeat units follow at residues 363–392, 399–431, and 438–467; these read IALQ…ITRQ, HELY…DVNT, and SGDC…TSDN.

This sequence belongs to the OspC family. In terms of assembly, interacts with host calmodulin (CALM1, CALM2 and/or CALM3); specifically interacts with the apo form of calmodulin, preventing calcium-binding.

It is found in the secreted. The protein resides in the host nucleus. It catalyses the reaction L-arginyl-[protein] + NAD(+) = ADP-riboxanated L-argininyl-[protein] + nicotinamide + NH4(+) + H(+). ADP-riboxanase effector that mediates arginine ADP-riboxanation of host caspases. ADP-riboxanation of host apoptotic caspases (CASP3, CASP8 and CASP9) prevents their activation, thereby inhibiting host cell extrinsic and intrinsic apoptosis. Does not catalyze ADP-riboxanation of host CASP4/CASP11. Independently of its ADP-riboxanase activity, acts as an inhibitor of calcium signaling by inhibiting host calmodulin, preventing activation of the JAK-STAT signaling pathway in response to interferon-beta. Mechanistically, acts by binding to the apo form of calmodulin, preventing calcium-binding and ability to activate host CaMK2 (CAMKII), which is required to stimulate the JAK-STAT signaling pathway in response to interferon-beta. The protein is Arginine ADP-riboxanase OspC1 of Shigella flexneri.